Consider the following 323-residue polypeptide: D-alanine--D-alanine ligase (323 aa).

Positions 105-305 (KQQLVPRGIP…YEDLVEAIVE (201 aa)) constitute an ATP-grasp domain. 131–188 (PLARPYVLKPVNEGSSVGVAIVTDESNYGNPIRRDAPGPWQEFRELLAEPFIRGRELT) is a binding site for ATP. Residues Asp-256, Glu-272, and Asn-274 each contribute to the Mg(2+) site.

The protein belongs to the D-alanine--D-alanine ligase family. Mg(2+) serves as cofactor. It depends on Mn(2+) as a cofactor.

The protein localises to the cytoplasm. It catalyses the reaction 2 D-alanine + ATP = D-alanyl-D-alanine + ADP + phosphate + H(+). It functions in the pathway cell wall biogenesis; peptidoglycan biosynthesis. Cell wall formation. The polypeptide is D-alanine--D-alanine ligase (Erythrobacter litoralis (strain HTCC2594)).